Reading from the N-terminus, the 271-residue chain is Putative two-component membrane permease complex subunit SMU_746c (271 aa).

The next 2 helical transmembrane spans lie at 34–54 (LAYI…TIWM) and 70–90 (FFSP…PTVP).

This sequence belongs to the UPF0703 family. Interacts with SMU_747c.

It localises to the cell membrane. Could be part of a two-component membrane permease system responsible for amino acid transport under low pH. Involved in acidogenesis, biofilm formation and low-pH survival. This chain is Putative two-component membrane permease complex subunit SMU_746c, found in Streptococcus mutans serotype c (strain ATCC 700610 / UA159).